The primary structure comprises 347 residues: NADH-quinone oxidoreductase subunit H (347 aa).

The next 8 helical transmembrane spans lie at 13-33 (LIMIGQSLLLLVCLLVFIAYI), 82-102 (AVFLLAPLVSVVLALSTWAVV), 115-135 (VGILYILAISSLEVYGIIMGG), 161-181 (IGLVIVTVLLCVGSLNLTDIV), 198-218 (FLDWHWLSLFPMFIVFFISAL), 258-278 (AVVLMCSLTTILFLGGWLPPV), 286-306 (VPGIIWFMLKACFVFFMFAMV), and 321-341 (LGWKVFLPLSLAMVVIVAFVL).

The protein belongs to the complex I subunit 1 family. In terms of assembly, NDH-1 is composed of 14 different subunits. Subunits NuoA, H, J, K, L, M, N constitute the membrane sector of the complex.

It localises to the cell inner membrane. The catalysed reaction is a quinone + NADH + 5 H(+)(in) = a quinol + NAD(+) + 4 H(+)(out). Its function is as follows. NDH-1 shuttles electrons from NADH, via FMN and iron-sulfur (Fe-S) centers, to quinones in the respiratory chain. The immediate electron acceptor for the enzyme in this species is believed to be ubiquinone. Couples the redox reaction to proton translocation (for every two electrons transferred, four hydrogen ions are translocated across the cytoplasmic membrane), and thus conserves the redox energy in a proton gradient. This subunit may bind ubiquinone. The chain is NADH-quinone oxidoreductase subunit H from Rhizobium rhizogenes (strain K84 / ATCC BAA-868) (Agrobacterium radiobacter).